A 413-amino-acid chain; its full sequence is Putative F-box protein At3g17560 (413 aa).

Positions 9–55 (TKLLFDLPQDVIEEIFSKVPVTCLRRIRSTCKRLYALLKDRGFIRKH) constitute an F-box domain.

This Arabidopsis thaliana (Mouse-ear cress) protein is Putative F-box protein At3g17560.